Here is a 602-residue protein sequence, read N- to C-terminus: Bifunctional lycopene cyclase/phytoene synthase (602 aa).

A lycopene beta-cyclase region spans residues 1 to 241 (MYDYAFVHLK…IVGGMAAFDQ (241 aa)). A run of 7 helical transmembrane segments spans residues 6-26 (FVHL…AYPI), 30-50 (IHLI…LPWD), 76-96 (FEEL…YILF), 118-138 (VVKV…WNAA), 146-166 (YLGL…TLAG), 168-188 (FILS…TFYL), and 230-250 (MLIV…YAFP). Positions 248 to 602 (AFPTLFPKVN…STLLRALYEQ (355 aa)) are phytoene synthase.

The protein in the N-terminal section; belongs to the lycopene beta-cyclase family. It in the C-terminal section; belongs to the phytoene/squalene synthase family.

Its subcellular location is the membrane. It carries out the reaction all-trans-lycopene = gamma-carotene. The enzyme catalyses gamma-carotene = all-trans-beta-carotene. It catalyses the reaction 2 (2E,6E,10E)-geranylgeranyl diphosphate = 15-cis-phytoene + 2 diphosphate. It participates in carotenoid biosynthesis; beta-carotene biosynthesis. It functions in the pathway carotenoid biosynthesis; phytoene biosynthesis; all-trans-phytoene from geranylgeranyl diphosphate: step 1/1. Bifunctional enzyme that catalyzes the reactions from geranylgeranyl diphosphate to phytoene (phytoene synthase) and from lycopene to beta-carotene via the intermediate gamma-carotene and from 3,4-didehydrolycopene to torulene (lycopene cyclase). Torulene is further processed to the acidic carotenoid neurosporaxanthin. The cyclase preferentially catalyzes single cyclizations at only one end of the substrate to produce monocyclic carotenoids. Neurosporaxanthin is synthesized from geranyl-geranyl pyrophosphate (GGPP) through several enzymatic activities. Phytoene synthase activity performed by the bifunctional enzyme al-2 first produces phytoene from geranyl-geranyl pyrophosphate (GGPP). The phytoene dehydrogenase al-1 then introduces 5 desaturations to lead to 3,4-didehydrolycopene via the intermediates phytofluene, zeta-carotene, neurosporene and lycopene. Al-2 cyclase activity then converts 3,4-didehydrolycopene into torulene. Al-2 can also convet lycopene into gamma-carotene which in turn is converted to beta-carotene by an additional al-2 cyclization reaction. Torulene is the substrate of the dioxidase cao-2 that breaks the molecule, removing five carbon atoms to yield beta-apo-4'-carotenal, whereas the aldehyde dehydrogenase ylo-1 mediates the last step by converting beta-apo-4'-carotenal into neurosporaxanthin. The protein is Bifunctional lycopene cyclase/phytoene synthase of Neurospora crassa (strain ATCC 24698 / 74-OR23-1A / CBS 708.71 / DSM 1257 / FGSC 987).